The following is a 1229-amino-acid chain: DNA-directed RNA polymerase subunit beta (1229 aa).

The segment at 1175 to 1229 (ESIDEDEQPQGLGAFERGLEEVENGEEDDDKEKFYEDLMDASQEQDESADDDIDE) is disordered. 2 stretches are compositionally biased toward acidic residues: residues 1195 to 1204 (EVENGEEDDD) and 1211 to 1229 (DLMD…DIDE).

The protein belongs to the RNA polymerase beta chain family. As to quaternary structure, the RNAP catalytic core consists of 2 alpha, 1 beta, 1 beta' and 1 omega subunit. When a sigma factor is associated with the core the holoenzyme is formed, which can initiate transcription.

The enzyme catalyses RNA(n) + a ribonucleoside 5'-triphosphate = RNA(n+1) + diphosphate. DNA-dependent RNA polymerase catalyzes the transcription of DNA into RNA using the four ribonucleoside triphosphates as substrates. The chain is DNA-directed RNA polymerase subunit beta from Caldicellulosiruptor saccharolyticus (strain ATCC 43494 / DSM 8903 / Tp8T 6331).